Reading from the N-terminus, the 352-residue chain is MSLRKIIHIDMDAFYASVELREQPHLKGRPVVVAWEGARSVICAASYEARQFGLHSAMSVATVKRLCPQAVYVPPHFDLYRQVSAQIHAVFRRYTDLIEPLSLDEAYLDVTRNFKNIPYAGEVAKEIRAAIFAETGLTASAGIAPNKFLAKIASDWRKPNGQFVLPPHKVMAFLETLPLGKIPGAGKVTLKKMQSLGMRTAGDLRRFERGELLNHFGRYGYRLYDLARGTDEHPVKAERERLQISTEITLPEDLPLGQAAGHLPHLAEDLWRQITRKNVEAQSVTLKLKTYDFRIITRTLTYSSVLPDCAALLQAAQMLMARVPPQTEDAFRLIGIGVGRLVPKNQQQDLWA.

Residues 6–186 (IIHIDMDAFY…LPLGKIPGAG (181 aa)) form the UmuC domain. Mg(2+) contacts are provided by Asp-10 and Asp-104. Glu-105 is a catalytic residue.

This sequence belongs to the DNA polymerase type-Y family. In terms of assembly, monomer. The cofactor is Mg(2+).

The protein localises to the cytoplasm. It catalyses the reaction DNA(n) + a 2'-deoxyribonucleoside 5'-triphosphate = DNA(n+1) + diphosphate. In terms of biological role, poorly processive, error-prone DNA polymerase involved in untargeted mutagenesis. Copies undamaged DNA at stalled replication forks, which arise in vivo from mismatched or misaligned primer ends. These misaligned primers can be extended by PolIV. Exhibits no 3'-5' exonuclease (proofreading) activity. May be involved in translesional synthesis, in conjunction with the beta clamp from PolIII. This Neisseria gonorrhoeae (strain ATCC 700825 / FA 1090) protein is DNA polymerase IV.